The sequence spans 56 residues: Preprotein translocase subunit SecG (56 aa).

At 1–29 the chain is on the cytoplasmic side; that stretch reads MAKDKTTLPPTGAGLMRFFDEDTRAIKVS. Residues 30 to 51 form a helical membrane-spanning segment; sequence PKGVIAIVLVLIAFEVFLHLFG. The Extracellular portion of the chain corresponds to 52 to 56; the sequence is PSIFG.

Belongs to the SEC61-beta family. Component of the protein translocase complex. Heterotrimer consisting of alpha (SecY), beta (SecG) and gamma (SecE) subunits. Can form oligomers of the heterotrimer.

The protein localises to the cell membrane. Functionally, involved in protein export. The function of the beta subunit is unknown, but it may be involved in stabilization of the trimeric complex. The chain is Preprotein translocase subunit SecG from Thermococcus gammatolerans (strain DSM 15229 / JCM 11827 / EJ3).